The following is a 250-amino-acid chain: NAD(P)H-quinone oxidoreductase subunit K (250 aa).

Residues C60, C61, C125, and C156 each coordinate [4Fe-4S] cluster. Residues 230 to 250 (ELNTPEIDVSPASQSSSTYES) form a disordered region. Residues 240–250 (PASQSSSTYES) show a composition bias toward polar residues.

The protein belongs to the complex I 20 kDa subunit family. In terms of assembly, NDH-1 can be composed of about 15 different subunits; different subcomplexes with different compositions have been identified which probably have different functions. It depends on [4Fe-4S] cluster as a cofactor.

The protein resides in the cellular thylakoid membrane. The enzyme catalyses a plastoquinone + NADH + (n+1) H(+)(in) = a plastoquinol + NAD(+) + n H(+)(out). It carries out the reaction a plastoquinone + NADPH + (n+1) H(+)(in) = a plastoquinol + NADP(+) + n H(+)(out). NDH-1 shuttles electrons from an unknown electron donor, via FMN and iron-sulfur (Fe-S) centers, to quinones in the respiratory and/or the photosynthetic chain. The immediate electron acceptor for the enzyme in this species is believed to be plastoquinone. Couples the redox reaction to proton translocation, and thus conserves the redox energy in a proton gradient. Cyanobacterial NDH-1 also plays a role in inorganic carbon-concentration. This Prochlorococcus marinus (strain MIT 9313) protein is NAD(P)H-quinone oxidoreductase subunit K.